Consider the following 281-residue polypeptide: Probable endonuclease 4 (281 aa).

Zn(2+) contacts are provided by His-78, His-118, Glu-149, Asp-181, His-184, His-216, Asp-229, His-231, and Glu-260.

Belongs to the AP endonuclease 2 family. Requires Zn(2+) as cofactor.

The enzyme catalyses Endonucleolytic cleavage to 5'-phosphooligonucleotide end-products.. Its function is as follows. Endonuclease IV plays a role in DNA repair. It cleaves phosphodiester bonds at apurinic or apyrimidinic (AP) sites, generating a 3'-hydroxyl group and a 5'-terminal sugar phosphate. This Thermoplasma acidophilum (strain ATCC 25905 / DSM 1728 / JCM 9062 / NBRC 15155 / AMRC-C165) protein is Probable endonuclease 4.